Reading from the N-terminus, the 334-residue chain is Holliday junction branch migration complex subunit RuvB (334 aa).

Residues 1 to 179 (MTHKISVLHQ…FAFTGRVDYY (179 aa)) form a large ATPase domain (RuvB-L) region. ATP contacts are provided by residues leucine 18, arginine 19, glycine 60, lysine 63, threonine 64, serine 65, 126–128 (EDF), arginine 169, tyrosine 179, and arginine 216. A Mg(2+)-binding site is contributed by threonine 64. Residues 180-250 (TDEDLVSILS…VAEKALAMLL (71 aa)) are small ATPAse domain (RuvB-S). Positions 253 to 334 (NLGLNEIDIK…RNPKDRWGEE (82 aa)) are head domain (RuvB-H). 2 residues coordinate DNA: arginine 308 and arginine 313.

The protein belongs to the RuvB family. As to quaternary structure, homohexamer. Forms an RuvA(8)-RuvB(12)-Holliday junction (HJ) complex. HJ DNA is sandwiched between 2 RuvA tetramers; dsDNA enters through RuvA and exits via RuvB. An RuvB hexamer assembles on each DNA strand where it exits the tetramer. Each RuvB hexamer is contacted by two RuvA subunits (via domain III) on 2 adjacent RuvB subunits; this complex drives branch migration. In the full resolvosome a probable DNA-RuvA(4)-RuvB(12)-RuvC(2) complex forms which resolves the HJ.

Its subcellular location is the cytoplasm. It carries out the reaction ATP + H2O = ADP + phosphate + H(+). The RuvA-RuvB-RuvC complex processes Holliday junction (HJ) DNA during genetic recombination and DNA repair, while the RuvA-RuvB complex plays an important role in the rescue of blocked DNA replication forks via replication fork reversal (RFR). RuvA specifically binds to HJ cruciform DNA, conferring on it an open structure. The RuvB hexamer acts as an ATP-dependent pump, pulling dsDNA into and through the RuvAB complex. RuvB forms 2 homohexamers on either side of HJ DNA bound by 1 or 2 RuvA tetramers; 4 subunits per hexamer contact DNA at a time. Coordinated motions by a converter formed by DNA-disengaged RuvB subunits stimulates ATP hydrolysis and nucleotide exchange. Immobilization of the converter enables RuvB to convert the ATP-contained energy into a lever motion, pulling 2 nucleotides of DNA out of the RuvA tetramer per ATP hydrolyzed, thus driving DNA branch migration. The RuvB motors rotate together with the DNA substrate, which together with the progressing nucleotide cycle form the mechanistic basis for DNA recombination by continuous HJ branch migration. Branch migration allows RuvC to scan DNA until it finds its consensus sequence, where it cleaves and resolves cruciform DNA. The chain is Holliday junction branch migration complex subunit RuvB from Chlamydia trachomatis serovar L2 (strain ATCC VR-902B / DSM 19102 / 434/Bu).